The primary structure comprises 194 residues: Inosine triphosphate pyrophosphatase (194 aa).

10-15 provides a ligand contact to ITP; it reads TGNANK. Glutamate 41 provides a ligand contact to Mg(2+). Residues lysine 54, 72 to 73, lysine 89, 147 to 150, lysine 172, and 177 to 178 each bind ITP; these read DT, FGWD, and QR.

This sequence belongs to the HAM1 NTPase family. In terms of assembly, homodimer. It depends on Mg(2+) as a cofactor. Requires Mn(2+) as cofactor.

It is found in the cytoplasm. The protein localises to the nucleus. The enzyme catalyses ITP + H2O = IMP + diphosphate + H(+). It carries out the reaction dITP + H2O = dIMP + diphosphate + H(+). It catalyses the reaction XTP + H2O = XMP + diphosphate + H(+). In terms of biological role, pyrophosphatase that hydrolyzes non-canonical purine nucleotides such as inosine triphosphate (ITP), deoxyinosine triphosphate (dITP) or xanthosine 5'-triphosphate (XTP) to their respective monophosphate derivatives. The enzyme does not distinguish between the deoxy- and ribose forms. Probably excludes non-canonical purines from RNA and DNA precursor pools, thus preventing their incorporation into RNA and DNA and avoiding chromosomal lesions. This Kluyveromyces lactis (strain ATCC 8585 / CBS 2359 / DSM 70799 / NBRC 1267 / NRRL Y-1140 / WM37) (Yeast) protein is Inosine triphosphate pyrophosphatase.